The chain runs to 319 residues: Beta-ketoacyl-[acyl-carrier-protein] synthase III (319 aa).

Active-site residues include cysteine 113 and histidine 246. Residues 247–251 (QANLR) form an ACP-binding region. Asparagine 276 is an active-site residue.

Belongs to the thiolase-like superfamily. FabH family. As to quaternary structure, homodimer.

The protein localises to the cytoplasm. The catalysed reaction is malonyl-[ACP] + acetyl-CoA + H(+) = 3-oxobutanoyl-[ACP] + CO2 + CoA. Its pathway is lipid metabolism; fatty acid biosynthesis. Functionally, catalyzes the condensation reaction of fatty acid synthesis by the addition to an acyl acceptor of two carbons from malonyl-ACP. Catalyzes the first condensation reaction which initiates fatty acid synthesis and may therefore play a role in governing the total rate of fatty acid production. Possesses both acetoacetyl-ACP synthase and acetyl transacylase activities. Its substrate specificity determines the biosynthesis of branched-chain and/or straight-chain of fatty acids. This chain is Beta-ketoacyl-[acyl-carrier-protein] synthase III, found in Chromobacterium violaceum (strain ATCC 12472 / DSM 30191 / JCM 1249 / CCUG 213 / NBRC 12614 / NCIMB 9131 / NCTC 9757 / MK).